We begin with the raw amino-acid sequence, 574 residues long: Sulfate adenylyltransferase (574 aa).

The segment at 1-169 (MANTPHGGVL…LEAVNKLNHY (169 aa)) is N-terminal. The tract at residues 170–394 (DYVGLRYTPA…LRESSPPRAL (225 aa)) is catalytic. Gln197 lines the sulfate pocket. ATP is bound by residues 197–200 (QTRN) and 291–294 (GRDH). Catalysis depends on residues Thr198, Arg199, and Asn200. Arg199 serves as a coordination point for sulfate. Ala295 contacts sulfate. Val333 contacts ATP. The allosteric regulation domain; adenylyl-sulfate kinase-like stretch occupies residues 395–574 (QGFTIFLTGY…LESEGYFERL (180 aa)). Residues 434–437 (DTVR), Arg451, 477–478 (IA), and Arg516 contribute to the 3'-phosphoadenylyl sulfate site.

The protein in the N-terminal section; belongs to the sulfate adenylyltransferase family. In the C-terminal section; belongs to the APS kinase family. In terms of assembly, homohexamer. Dimer of trimers.

The protein localises to the cytoplasm. The enzyme catalyses sulfate + ATP + H(+) = adenosine 5'-phosphosulfate + diphosphate. It functions in the pathway sulfur metabolism; hydrogen sulfide biosynthesis; sulfite from sulfate: step 1/3. Allosterically inhibited by 3'-phosphoadenosine 5'-phosphosulfate (PAPS). In terms of biological role, catalyzes the first intracellular reaction of sulfate assimilation, forming adenosine-5'-phosphosulfate (APS) from inorganic sulfate and ATP. Plays an important role in sulfate activation as a component of the biosynthesis pathway of sulfur-containing amino acids. In Emericella nidulans (strain FGSC A4 / ATCC 38163 / CBS 112.46 / NRRL 194 / M139) (Aspergillus nidulans), this protein is Sulfate adenylyltransferase.